The chain runs to 99 residues: MMNMQNMMRQAQKLQKQMEQKQADLAAMQFTGKSAQDLVTATFTGDKKLVGIDFKEAVVDPEDVETLQDMTTQAINDALTQIDEATKKTLGAFAGKLPF.

This sequence belongs to the YbaB/EbfC family. Homodimer.

It localises to the cytoplasm. Its subcellular location is the nucleoid. Functionally, binds to DNA and alters its conformation. May be involved in regulation of gene expression, nucleoid organization and DNA protection. In Streptococcus pyogenes serotype M3 (strain ATCC BAA-595 / MGAS315), this protein is Nucleoid-associated protein SpyM3_1606.